The following is a 200-amino-acid chain: 3-isopropylmalate dehydratase small subunit (200 aa).

It belongs to the LeuD family. LeuD type 1 subfamily. As to quaternary structure, heterodimer of LeuC and LeuD.

The enzyme catalyses (2R,3S)-3-isopropylmalate = (2S)-2-isopropylmalate. Its pathway is amino-acid biosynthesis; L-leucine biosynthesis; L-leucine from 3-methyl-2-oxobutanoate: step 2/4. Catalyzes the isomerization between 2-isopropylmalate and 3-isopropylmalate, via the formation of 2-isopropylmaleate. The sequence is that of 3-isopropylmalate dehydratase small subunit from Actinobacillus pleuropneumoniae serotype 3 (strain JL03).